The sequence spans 150 residues: Small ribosomal subunit protein uS15 (150 aa).

Positions M1–Q22 are disordered.

It belongs to the universal ribosomal protein uS15 family. As to quaternary structure, part of the 30S ribosomal subunit.

This chain is Small ribosomal subunit protein uS15, found in Aeropyrum pernix (strain ATCC 700893 / DSM 11879 / JCM 9820 / NBRC 100138 / K1).